The sequence spans 278 residues: Short-chain dehydrogenase RED2 (278 aa).

Positions 15, 70, 132, 178, 182, 211, and 213 each coordinate NADP(+). Y178 acts as the Proton donor in catalysis. The active-site Lowers pKa of active site Tyr is K182.

It belongs to the short-chain dehydrogenases/reductases (SDR) family.

The protein operates within polyketide biosynthesis. In terms of biological role, short-chain dehydrogenase; part of the gene cluster that mediates the biosynthesis of pyriculol and pyriculariol, two heptaketides that induce lesion formation upon application on rice leaves but are dispensable for pathogenicity. The highly reducing polyketide synthase synthesizes the heptaketide backbone of pyriculol and pyriculariol. Pyriculol and pyriculariol contain several hydroxyl moieties and double bonds, so it can be assumed that several reduction steps occur during biosynthesis. These reactions could be executed by PKS19 itself or partly by the tailoring enzymes OXR1, OXR2, RED1, RED2 or RED3, identified within the cluster. The FAD-linked oxidoreductase OXR1 is the only tailoring enzyme for which the function has been determined yet, and is involved in the oxidation of dihydropyriculol and dihydropyriculariol into pyriculol and pyriculariol, respectively. The sequence is that of Short-chain dehydrogenase RED2 from Pyricularia oryzae (strain 70-15 / ATCC MYA-4617 / FGSC 8958) (Rice blast fungus).